The following is a 197-amino-acid chain: Imidazoleglycerol-phosphate dehydratase (197 aa).

It belongs to the imidazoleglycerol-phosphate dehydratase family.

The protein localises to the cytoplasm. It carries out the reaction D-erythro-1-(imidazol-4-yl)glycerol 3-phosphate = 3-(imidazol-4-yl)-2-oxopropyl phosphate + H2O. The protein operates within amino-acid biosynthesis; L-histidine biosynthesis; L-histidine from 5-phospho-alpha-D-ribose 1-diphosphate: step 6/9. This chain is Imidazoleglycerol-phosphate dehydratase, found in Syntrophomonas wolfei subsp. wolfei (strain DSM 2245B / Goettingen).